Consider the following 262-residue polypeptide: uncharacterized protein (262 aa).

Disordered regions lie at residues 1 to 30 (MGKK…KKEK) and 232 to 262 (EEEE…DMEE). Composition is skewed to acidic residues over residues 9–21 (NEDG…ETES), 232–245 (EEEE…EETD), and 253–262 (EEDEDEDMEE).

This is an uncharacterized protein from Caenorhabditis elegans.